A 193-amino-acid polypeptide reads, in one-letter code: dCTP deaminase (193 aa).

Residues 110–115 (RSSLAR), D128, 136–138 (VLE), Y171, K178, and Q182 contribute to the dCTP site. The active-site Proton donor/acceptor is the E138. Residues 169-193 (RPYNRREDAKYRNQQGAVASRIDKD) form a disordered region.

The protein belongs to the dCTP deaminase family. Homotrimer.

The catalysed reaction is dCTP + H2O + H(+) = dUTP + NH4(+). It functions in the pathway pyrimidine metabolism; dUMP biosynthesis; dUMP from dCTP (dUTP route): step 1/2. Its function is as follows. Catalyzes the deamination of dCTP to dUTP. In Escherichia coli O8 (strain IAI1), this protein is dCTP deaminase.